Reading from the N-terminus, the 287-residue chain is Small ribosomal subunit protein uS2 (287 aa).

A disordered region spans residues 235–287 (ESGFATGGGDWEATAPAAASGWDDAAAQPQNWDSAAQGAASWDEAAAPKEGQW). The span at 247–261 (ATAPAAASGWDDAAA) shows a compositional bias: low complexity.

Belongs to the universal ribosomal protein uS2 family. Component of the small ribosomal subunit. Mature ribosomes consist of a small (40S) and a large (60S) subunit. The 40S subunit contains about 33 different proteins and 1 molecule of RNA (18S). The 60S subunit contains about 49 different proteins and 3 molecules of RNA (25S, 5.8S and 5S). Interacts with RPS21.

The protein resides in the cytoplasm. Functionally, required for the assembly and/or stability of the 40S ribosomal subunit. Required for the processing of the 20S rRNA-precursor to mature 18S rRNA in a late step of the maturation of 40S ribosomal subunits. In Pyricularia oryzae (strain 70-15 / ATCC MYA-4617 / FGSC 8958) (Rice blast fungus), this protein is Small ribosomal subunit protein uS2.